A 385-amino-acid polypeptide reads, in one-letter code: uncharacterized protein (385 aa).

This sequence belongs to the mycobacterial PPE family.

This is an uncharacterized protein from Mycobacterium tuberculosis (strain CDC 1551 / Oshkosh).